Reading from the N-terminus, the 409-residue chain is Major capsid protein (409 aa).

It belongs to the lambda phage major capsid protein family. As to quaternary structure, homomultimer. Interacts with the portal protein. Interacts with the decoration protein.

It localises to the virion. The protein localises to the host cytoplasm. Assembles to form an icosahedric capsid shell with a T=7 symmetry although with a diameter of about 82 nm, which is a larger volume than the usual T=7 capsids. A dramatic reconfiguration of the capsid shell that expands the procaspid from a diameter of 66 nm to a supersized capsid of 82 nm, allows packaging of the large viral DNA genome. The capsid decoration protein binds the expanded capsid and stabilizes it. The sequence is that of Major capsid protein from Thermus virus P23-45 (Thermus thermophilus phage P23-45).